The chain runs to 95 residues: Small ribosomal subunit protein bS18 (95 aa).

Belongs to the bacterial ribosomal protein bS18 family. As to quaternary structure, part of the 30S ribosomal subunit. Forms a tight heterodimer with protein bS6.

Its function is as follows. Binds as a heterodimer with protein bS6 to the central domain of the 16S rRNA, where it helps stabilize the platform of the 30S subunit. The polypeptide is Small ribosomal subunit protein bS18 (Rickettsia massiliae (strain Mtu5)).